Here is a 20-residue protein sequence, read N- to C-terminus: Elongation factor Tu (20 aa).

Belongs to the GTP-binding elongation factor family. EF-Tu/EF-1A subfamily. In terms of assembly, monomer.

The protein resides in the cytoplasm. Functionally, this protein promotes the GTP-dependent binding of aminoacyl-tRNA to the A-site of ribosomes during protein biosynthesis. The chain is Elongation factor Tu (tuf) from Mycoplasmopsis synoviae (Mycoplasma synoviae).